Reading from the N-terminus, the 327-residue chain is Transaldolase (327 aa).

Lys132 functions as the Schiff-base intermediate with substrate in the catalytic mechanism.

This sequence belongs to the transaldolase family. Type 1 subfamily.

It is found in the cytoplasm. It catalyses the reaction D-sedoheptulose 7-phosphate + D-glyceraldehyde 3-phosphate = D-erythrose 4-phosphate + beta-D-fructose 6-phosphate. Its pathway is carbohydrate degradation; pentose phosphate pathway; D-glyceraldehyde 3-phosphate and beta-D-fructose 6-phosphate from D-ribose 5-phosphate and D-xylulose 5-phosphate (non-oxidative stage): step 2/3. Its function is as follows. Transaldolase is important for the balance of metabolites in the pentose-phosphate pathway. This is Transaldolase from Chlamydia pneumoniae (Chlamydophila pneumoniae).